The sequence spans 432 residues: D-amino acid dehydrogenase (432 aa).

An FAD-binding site is contributed by 3–17; the sequence is VVILGSGVVGVTSAW.

It belongs to the DadA oxidoreductase family. FAD serves as cofactor.

It catalyses the reaction a D-alpha-amino acid + A + H2O = a 2-oxocarboxylate + AH2 + NH4(+). The protein operates within amino-acid degradation; D-alanine degradation; NH(3) and pyruvate from D-alanine: step 1/1. In terms of biological role, oxidative deamination of D-amino acids. The chain is D-amino acid dehydrogenase from Salmonella dublin (strain CT_02021853).